Reading from the N-terminus, the 54-residue chain is Hemolytic toxin (54 aa).

The tract at residues 3 to 12 is plays an important role in the hemolytic activity; it reads ALAGTIIAGA. The tract at residues 11–30 is N-terminal region; sequence GASLGFQILDKVLGELGKVS.

It belongs to the actinoporin family. Sea anemone subfamily. In terms of assembly, octamer or nonamer in membranes. Monomer in the soluble state.

Its subcellular location is the secreted. The protein localises to the nematocyst. The protein resides in the target cell membrane. Pore-forming protein that forms cations-selective hydrophilic pores of around 1 nm and causes cytolysis. Pore formation is a multi-step process that involves specific recognition of membrane sphingomyelin (but neither cholesterol nor phosphatidylcholine) using aromatic rich region and adjacent phosphocholine (POC) binding site, firm binding to the membrane (mainly driven by hydrophobic interactions) accompanied by the transfer of the N-terminal region to the lipid-water interface and finally pore formation after oligomerization of monomers. The polypeptide is Hemolytic toxin (Heteractis magnifica (Magnificent sea anemone)).